We begin with the raw amino-acid sequence, 714 residues long: MLSFCDYFWSEDLVSGLDVLFDRLYHGCEQCDLFIQLFASRMQFEVSHGRQLFGIEAGMDNLKAVQEDEDEGVTVSRALRGILQEMSQEGTHHLTIASNIESLVLQPFSKWCIEHRERIQYSEKTLLTNVNNFRKSKKYVGKLEKEYFNKCRQLEEFKRTHFNEDELANAMKSLKIQNKYEEDVAREKDHRFFNRIAGIDFDYKTMKETLQLLLTKLPKTDYKLPLISYSLSNTNNGGEITKFLLDHMSLKDIDQAETFGQDLLNLGFLKYCNGVGNTFVNSKKFQYQWKNTAYMFANVPMPGSEEPTTGESLISRFNNWDGSSAKEIIQSKIGNDQGAAKIQAPHISDNERTLFRMMDALAASDKKYYQECFKMDALRCSVEELLIDHLSFMEKCESDRLNAIKKATLDFCSTLGNKISSLRLCIDKMLTLENDIDPTADLLQLLVKYKTGSFKPQAIVYNNYYNPGSFQNFGVDLETRCRLDKKVVPLIISSIFSYMDKIYPDLPNDKVRTSIWTDSVKLSLTHQLRNLLNKQQFHNEGEIFDILSTSKLEPSTIASVVKIYLLELPDPLIPNDVSDILRVLYLDYPPLVETALQNSTSSPENQQDDDNEEGFDTKRIRGLYTTLSSLSKPHIATLDAITTHFYRLIKILKMGENGNEVADEFTVSISQEFANCIIQSKITDDNEIGFKIFYDLLTHKKQIFHELKRQNSKN.

One can recognise an F-BAR domain in the interval 2–441; it reads LSFCDYFWSE…LENDIDPTAD (440 aa). The 81-residue stretch at 218 to 298 folds into the DEP domain; that stretch reads PKTDYKLPLI…WKNTAYMFAN (81 aa). A Rho-GAP domain is found at 475 to 704; that stretch reads VDLETRCRLD…DLLTHKKQIF (230 aa).

As to quaternary structure, interacts with CDC42 and RHO5.

Functionally, acts in signal transduction. Activates CDC42 and RHO5. This chain is Rho-GTPase-activating protein RGD2 (RGD2), found in Saccharomyces cerevisiae (strain ATCC 204508 / S288c) (Baker's yeast).